A 598-amino-acid polypeptide reads, in one-letter code: UvrABC system protein C (598 aa).

Residues 11-91 enclose the GIY-YIG domain; it reads QKPGVYIMHN…IKKYRPHYNI (81 aa). Residues 195-230 enclose the UVR domain; the sequence is KTTIKKLKKDMNRYAKNMEFEKAAMLRDQIDTIKIT.

Belongs to the UvrC family. As to quaternary structure, interacts with UvrB in an incision complex.

Its subcellular location is the cytoplasm. Its function is as follows. The UvrABC repair system catalyzes the recognition and processing of DNA lesions. UvrC both incises the 5' and 3' sides of the lesion. The N-terminal half is responsible for the 3' incision and the C-terminal half is responsible for the 5' incision. This Methanosphaera stadtmanae (strain ATCC 43021 / DSM 3091 / JCM 11832 / MCB-3) protein is UvrABC system protein C.